The sequence spans 399 residues: Phosphoglycerate kinase (399 aa).

Residues 24–26 (DYN), R39, 62–65 (HLGR), R121, and R154 contribute to the substrate site. ATP is bound by residues K204, G295, E326, and 355-358 (GGDS).

The protein belongs to the phosphoglycerate kinase family. Monomer.

The protein localises to the cytoplasm. It catalyses the reaction (2R)-3-phosphoglycerate + ATP = (2R)-3-phospho-glyceroyl phosphate + ADP. The protein operates within carbohydrate degradation; glycolysis; pyruvate from D-glyceraldehyde 3-phosphate: step 2/5. This chain is Phosphoglycerate kinase, found in Elusimicrobium minutum (strain Pei191).